A 245-amino-acid polypeptide reads, in one-letter code: 1-(5-phosphoribosyl)-5-[(5-phosphoribosylamino)methylideneamino] imidazole-4-carboxamide isomerase (245 aa).

The active-site Proton acceptor is D7. D129 (proton donor) is an active-site residue.

It belongs to the HisA/HisF family.

The protein resides in the cytoplasm. The enzyme catalyses 1-(5-phospho-beta-D-ribosyl)-5-[(5-phospho-beta-D-ribosylamino)methylideneamino]imidazole-4-carboxamide = 5-[(5-phospho-1-deoxy-D-ribulos-1-ylimino)methylamino]-1-(5-phospho-beta-D-ribosyl)imidazole-4-carboxamide. It functions in the pathway amino-acid biosynthesis; L-histidine biosynthesis; L-histidine from 5-phospho-alpha-D-ribose 1-diphosphate: step 4/9. This is 1-(5-phosphoribosyl)-5-[(5-phosphoribosylamino)methylideneamino] imidazole-4-carboxamide isomerase from Enterobacter sp. (strain 638).